Here is a 207-residue protein sequence, read N- to C-terminus: 3,4-dihydroxy-2-butanone 4-phosphate synthase (207 aa).

D-ribulose 5-phosphate is bound by residues arginine 28–glutamate 29, aspartate 33, arginine 140–threonine 144, and glutamate 164. Glutamate 29 lines the Mg(2+) pocket. Histidine 143 contributes to the Mg(2+) binding site.

The protein belongs to the DHBP synthase family. Homodimer. Mg(2+) is required as a cofactor. The cofactor is Mn(2+).

The enzyme catalyses D-ribulose 5-phosphate = (2S)-2-hydroxy-3-oxobutyl phosphate + formate + H(+). It functions in the pathway cofactor biosynthesis; riboflavin biosynthesis; 2-hydroxy-3-oxobutyl phosphate from D-ribulose 5-phosphate: step 1/1. In terms of biological role, catalyzes the conversion of D-ribulose 5-phosphate to formate and 3,4-dihydroxy-2-butanone 4-phosphate. The sequence is that of 3,4-dihydroxy-2-butanone 4-phosphate synthase from Oceanobacillus iheyensis (strain DSM 14371 / CIP 107618 / JCM 11309 / KCTC 3954 / HTE831).